Reading from the N-terminus, the 187-residue chain is MNVTSLSFPYGESIQWFCADNAKNLPSSPLKEWLLAPGSLTQKLKGCCDKFEVKILGEGQCAPLEGEYPKQNAVWVREVLLCLDSVPWVFARTLIPQSLLSTRQADFLGLGTRPLGELLFSQDSFVPGRIEIARFTTDSRLAQLAQSLAQNVEHELWGRRRYFHHDEEEMFVSEMFLPAAVQAMARL.

The substrate site is built by Arg77, Leu115, and Glu174.

It belongs to the UbiC family.

Its subcellular location is the cytoplasm. It catalyses the reaction chorismate = 4-hydroxybenzoate + pyruvate. The protein operates within cofactor biosynthesis; ubiquinone biosynthesis. Its function is as follows. Removes the pyruvyl group from chorismate, with concomitant aromatization of the ring, to provide 4-hydroxybenzoate (4HB) for the ubiquinone pathway. This chain is Probable chorismate pyruvate-lyase, found in Shewanella sp. (strain ANA-3).